Consider the following 579-residue polypeptide: Acetolactate synthase (579 aa).

Thiamine diphosphate is bound at residue glutamate 61. FAD is bound by residues arginine 163, histidine 274–arginine 295, and aspartate 317–aspartate 336. The thiamine pyrophosphate binding stretch occupies residues glutamine 408–tryptophan 487. The Mg(2+) site is built by aspartate 458 and asparagine 485.

Belongs to the TPP enzyme family. It depends on Mg(2+) as a cofactor. Thiamine diphosphate serves as cofactor.

It carries out the reaction 2 pyruvate + H(+) = (2S)-2-acetolactate + CO2. It functions in the pathway amino-acid biosynthesis; L-isoleucine biosynthesis; L-isoleucine from 2-oxobutanoate: step 1/4. The protein operates within amino-acid biosynthesis; L-valine biosynthesis; L-valine from pyruvate: step 1/4. The polypeptide is Acetolactate synthase (ilvY) (Arthrospira platensis (Spirulina platensis)).